Reading from the N-terminus, the 553-residue chain is Methyl-coenzyme M reductase II subunit alpha (553 aa).

Gln-150 contacts coenzyme F430. Residues Arg-228, 259–260 (KH), and Arg-273 contribute to the coenzyme B site. A Pros-methylhistidine modification is found at His-260. Arg-274 is modified (5-methylarginine). Residue Tyr-335 coordinates coenzyme M. A 2-methylglutamine modification is found at Gln-402. Residue Tyr-446 coordinates coenzyme M. Gly-447 is modified (1-thioglycine). A (Z)-2,3-didehydroaspartate modification is found at Asp-452. Residue Cys-454 is modified to S-methylcysteine.

This sequence belongs to the methyl-coenzyme M reductase alpha subunit family. In terms of assembly, MCR is a hexamer of two alpha, two beta, and two gamma chains, forming a dimer of heterotrimers. Requires coenzyme F430 as cofactor. Post-translationally, the alpha subunit contains six modified amino acids near the active site region. Is methylated on His-260, Arg-274, Gln-402 and Cys-454, probably by the action of specific S-adenosylmethionine-dependent methyltransferases. Also contains a thioglycine at position 447, forming a thiopeptide bond. Contains a didehydroaspartate residue at position 452. The methylation on C5 of Arg-274 is a post-translational methylation not essential in vivo, but which plays a role for the stability and structural integrity of MCR.

The catalysed reaction is coenzyme B + methyl-coenzyme M = methane + coenzyme M-coenzyme B heterodisulfide. The protein operates within one-carbon metabolism; methyl-coenzyme M reduction; methane from methyl-coenzyme M: step 1/1. Component of the methyl-coenzyme M reductase (MCR) I that catalyzes the reductive cleavage of methyl-coenzyme M (CoM-S-CH3 or 2-(methylthio)ethanesulfonate) using coenzyme B (CoB or 7-mercaptoheptanoylthreonine phosphate) as reductant which results in the production of methane and the mixed heterodisulfide of CoB and CoM (CoM-S-S-CoB). This is the final step in methanogenesis. The sequence is that of Methyl-coenzyme M reductase II subunit alpha (mrtA) from Methanothermobacter marburgensis (strain ATCC BAA-927 / DSM 2133 / JCM 14651 / NBRC 100331 / OCM 82 / Marburg) (Methanobacterium thermoautotrophicum).